A 192-amino-acid polypeptide reads, in one-letter code: UPF0312 protein Pput_4854 (192 aa).

The first 23 residues, 1–23 (MLKKTFAALALGTALLSAGQAMA), serve as a signal peptide directing secretion.

It belongs to the UPF0312 family. Type 1 subfamily.

Its subcellular location is the periplasm. The chain is UPF0312 protein Pput_4854 from Pseudomonas putida (strain ATCC 700007 / DSM 6899 / JCM 31910 / BCRC 17059 / LMG 24140 / F1).